A 474-amino-acid chain; its full sequence is ATP synthase subunit beta (474 aa).

152 to 159 contacts ATP; the sequence is GGAGVGKT.

It belongs to the ATPase alpha/beta chains family. As to quaternary structure, F-type ATPases have 2 components, CF(1) - the catalytic core - and CF(0) - the membrane proton channel. CF(1) has five subunits: alpha(3), beta(3), gamma(1), delta(1), epsilon(1). CF(0) has three main subunits: a(1), b(2) and c(9-12). The alpha and beta chains form an alternating ring which encloses part of the gamma chain. CF(1) is attached to CF(0) by a central stalk formed by the gamma and epsilon chains, while a peripheral stalk is formed by the delta and b chains.

Its subcellular location is the cell inner membrane. The enzyme catalyses ATP + H2O + 4 H(+)(in) = ADP + phosphate + 5 H(+)(out). In terms of biological role, produces ATP from ADP in the presence of a proton gradient across the membrane. The catalytic sites are hosted primarily by the beta subunits. This Magnetococcus marinus (strain ATCC BAA-1437 / JCM 17883 / MC-1) protein is ATP synthase subunit beta.